Consider the following 449-residue polypeptide: Phosphoglucosamine mutase (449 aa).

Serine 102 functions as the Phosphoserine intermediate in the catalytic mechanism. Mg(2+)-binding residues include serine 102, aspartate 241, aspartate 243, and aspartate 245. Serine 102 bears the Phosphoserine mark.

This sequence belongs to the phosphohexose mutase family. Mg(2+) is required as a cofactor. Activated by phosphorylation.

It carries out the reaction alpha-D-glucosamine 1-phosphate = D-glucosamine 6-phosphate. Catalyzes the conversion of glucosamine-6-phosphate to glucosamine-1-phosphate. The sequence is that of Phosphoglucosamine mutase from Pseudoalteromonas translucida (strain TAC 125).